A 115-amino-acid chain; its full sequence is Large ribosomal subunit protein bL19 (115 aa).

Belongs to the bacterial ribosomal protein bL19 family.

Its function is as follows. This protein is located at the 30S-50S ribosomal subunit interface and may play a role in the structure and function of the aminoacyl-tRNA binding site. In Lachnospira eligens (strain ATCC 27750 / DSM 3376 / VPI C15-48 / C15-B4) (Eubacterium eligens), this protein is Large ribosomal subunit protein bL19.